A 390-amino-acid polypeptide reads, in one-letter code: GTPase Obg (390 aa).

Positions 1-159 (MKFVDEATIL…RDLQLELMLL (159 aa)) constitute an Obg domain. The interval 127–146 (NTRFKSSVNRTPRQKTMGTP) is disordered. Residues 129–143 (RFKSSVNRTPRQKTM) show a composition bias toward polar residues. The region spanning 160-333 (ADVGMLGMPN…LCWDVMHFII (174 aa)) is the OBG-type G domain. Residues 166-173 (GMPNAGKS), 191-195 (FTTLV), 213-216 (DIPG), 283-286 (NKID), and 314-316 (SAA) each bind GTP. 2 residues coordinate Mg(2+): Ser-173 and Thr-193. Residues 364 to 384 (MEAEAEEEWDDDWDEDDDEGV) are compositionally biased toward acidic residues. The disordered stretch occupies residues 364–390 (MEAEAEEEWDDDWDEDDDEGVEIVYQR).

The protein belongs to the TRAFAC class OBG-HflX-like GTPase superfamily. OBG GTPase family. In terms of assembly, monomer. Requires Mg(2+) as cofactor.

It localises to the cytoplasm. In terms of biological role, an essential GTPase which binds GTP, GDP and possibly (p)ppGpp with moderate affinity, with high nucleotide exchange rates and a fairly low GTP hydrolysis rate. Plays a role in control of the cell cycle, stress response, ribosome biogenesis and in those bacteria that undergo differentiation, in morphogenesis control. The sequence is that of GTPase Obg from Cronobacter sakazakii (strain ATCC BAA-894) (Enterobacter sakazakii).